The following is a 339-amino-acid chain: Transmembrane protein 120B (339 aa).

The stretch at 1 to 67 (MSGQLERCER…KHTLQRYKRH (67 aa)) forms a coiled coil. 6 consecutive transmembrane segments (helical) span residues 102–124 (GLYL…AKFA), 132–152 (FKLY…FVLH), 159–179 (VFNF…SILI), 187–207 (GWWV…LTWP), 270–290 (FLLP…VTLF), and 302–322 (QVFV…LTTL).

The protein belongs to the TMEM120 family. Heterooligomer with TMEM120A. Expressed in inguinal and subcutaneous white adipose tissue and in brown adipose tissue.

Its subcellular location is the nucleus inner membrane. Functionally, necessary for efficient adipogenesis. Does not show ion channel activity. This is Transmembrane protein 120B from Mus musculus (Mouse).